The chain runs to 302 residues: Ribosomal RNA small subunit methyltransferase H (302 aa).

S-adenosyl-L-methionine is bound by residues 32 to 34, Asp51, Phe78, Asp97, and Gln104; that span reads GGH.

It belongs to the methyltransferase superfamily. RsmH family.

The protein localises to the cytoplasm. It catalyses the reaction cytidine(1402) in 16S rRNA + S-adenosyl-L-methionine = N(4)-methylcytidine(1402) in 16S rRNA + S-adenosyl-L-homocysteine + H(+). In terms of biological role, specifically methylates the N4 position of cytidine in position 1402 (C1402) of 16S rRNA. The sequence is that of Ribosomal RNA small subunit methyltransferase H from Nitratiruptor sp. (strain SB155-2).